We begin with the raw amino-acid sequence, 79 residues long: ATP synthase subunit c (79 aa).

The next 2 helical transmembrane spans lie at 11–31 (MAAA…IGIL) and 53–73 (FFIV…LGLY).

This sequence belongs to the ATPase C chain family. In terms of assembly, F-type ATPases have 2 components, F(1) - the catalytic core - and F(0) - the membrane proton channel. F(1) has five subunits: alpha(3), beta(3), gamma(1), delta(1), epsilon(1). F(0) has three main subunits: a(1), b(2) and c(10-14). The alpha and beta chains form an alternating ring which encloses part of the gamma chain. F(1) is attached to F(0) by a central stalk formed by the gamma and epsilon chains, while a peripheral stalk is formed by the delta and b chains.

It is found in the cell inner membrane. In terms of biological role, f(1)F(0) ATP synthase produces ATP from ADP in the presence of a proton or sodium gradient. F-type ATPases consist of two structural domains, F(1) containing the extramembraneous catalytic core and F(0) containing the membrane proton channel, linked together by a central stalk and a peripheral stalk. During catalysis, ATP synthesis in the catalytic domain of F(1) is coupled via a rotary mechanism of the central stalk subunits to proton translocation. Its function is as follows. Key component of the F(0) channel; it plays a direct role in translocation across the membrane. A homomeric c-ring of between 10-14 subunits forms the central stalk rotor element with the F(1) delta and epsilon subunits. The chain is ATP synthase subunit c from Serratia proteamaculans (strain 568).